The chain runs to 132 residues: Large ribosomal subunit protein bL17 (132 aa).

Belongs to the bacterial ribosomal protein bL17 family. Part of the 50S ribosomal subunit. Contacts protein L32.

This is Large ribosomal subunit protein bL17 from Albidiferax ferrireducens (strain ATCC BAA-621 / DSM 15236 / T118) (Rhodoferax ferrireducens).